We begin with the raw amino-acid sequence, 459 residues long: ADP-specific phosphofructokinase (459 aa).

One can recognise an ADPK domain in the interval 1-457 (MMEFLKDFQK…FASYLSLLKR (457 aa)). Glu268, Glu298, and Asp441 together coordinate Mg(2+). The active-site Proton acceptor is the Asp441.

The protein belongs to the carbohydrate kinase PfkC family. Requires Mg(2+) as cofactor.

The protein resides in the cytoplasm. It carries out the reaction beta-D-fructose 6-phosphate + ADP = beta-D-fructose 1,6-bisphosphate + AMP + H(+). It functions in the pathway carbohydrate degradation; glycolysis. Its function is as follows. Catalyzes the phosphorylation of fructose 6-phosphate to fructose 1,6-bisphosphate using ADP as the phosphate donor. The sequence is that of ADP-specific phosphofructokinase from Thermococcus litoralis.